We begin with the raw amino-acid sequence, 74 residues long: uncharacterized protein (74 aa).

This is an uncharacterized protein from Methanocaldococcus jannaschii (strain ATCC 43067 / DSM 2661 / JAL-1 / JCM 10045 / NBRC 100440) (Methanococcus jannaschii).